The primary structure comprises 100 residues: Aspartyl/glutamyl-tRNA(Asn/Gln) amidotransferase subunit C (100 aa).

Belongs to the GatC family. Heterotrimer of A, B and C subunits.

It carries out the reaction L-glutamyl-tRNA(Gln) + L-glutamine + ATP + H2O = L-glutaminyl-tRNA(Gln) + L-glutamate + ADP + phosphate + H(+). The catalysed reaction is L-aspartyl-tRNA(Asn) + L-glutamine + ATP + H2O = L-asparaginyl-tRNA(Asn) + L-glutamate + ADP + phosphate + 2 H(+). In terms of biological role, allows the formation of correctly charged Asn-tRNA(Asn) or Gln-tRNA(Gln) through the transamidation of misacylated Asp-tRNA(Asn) or Glu-tRNA(Gln) in organisms which lack either or both of asparaginyl-tRNA or glutaminyl-tRNA synthetases. The reaction takes place in the presence of glutamine and ATP through an activated phospho-Asp-tRNA(Asn) or phospho-Glu-tRNA(Gln). This chain is Aspartyl/glutamyl-tRNA(Asn/Gln) amidotransferase subunit C, found in Streptococcus pneumoniae serotype 19F (strain G54).